We begin with the raw amino-acid sequence, 29 residues long: Galanin (29 aa).

Position 29 is a threonine amide (Thr29).

It belongs to the galanin family.

The protein localises to the secreted. In terms of biological role, contracts smooth muscle of the gastrointestinal and genitourinary tract, regulates growth hormone release, modulates insulin release, and may be involved in the control of adrenal secretion. The protein is Galanin (GAL) of Gallus gallus (Chicken).